The following is a 526-amino-acid chain: Protein translocase subunit SecD (526 aa).

6 consecutive transmembrane segments (helical) span residues 8–28 (LIVF…SLLE), 356–376 (IIAL…YYSM), 379–399 (VIAC…MAIF), 405–425 (LPGM…NIII), 453–473 (AIFD…AYGT), and 478–498 (GFAL…IIGT).

Belongs to the SecD/SecF family. SecD subfamily. In terms of assembly, forms a complex with SecF. Part of the essential Sec protein translocation apparatus which comprises SecA, SecYEG and auxiliary proteins SecDF-YajC and YidC.

Its subcellular location is the cell inner membrane. Part of the Sec protein translocase complex. Interacts with the SecYEG preprotein conducting channel. SecDF uses the proton motive force (PMF) to complete protein translocation after the ATP-dependent function of SecA. The polypeptide is Protein translocase subunit SecD (Helicobacter pylori (strain J99 / ATCC 700824) (Campylobacter pylori J99)).